The following is a 437-amino-acid chain: MKVYIETMGCAMNSRDSEHLLSELSKLDYKETSDPKAADLILINTCSVREKPERKLFSEIGQFAKIKKPNAKIGVCGCTASHMGADILKKAPSVSFVLGARNVSKISQVIHKEKAVEVAIDYDESAYAFEFFEKKAQIRSLLNISIGCDKKCAYCIVPHTRGKEISIPMDLILKEAEKLASNGTKELMLLGQNVNNYGARFSSEHAKVDFSDLLDKLSEIQGIERIRFTSPHPLHMNDAFLERFAKNPKVCKSIHMPLQSGSSTVLKMMRRGYSKEWFLNRVEKLKALVPEVGISTDIIVGFPNESDKDFEDTMEVLEKVRFDTLYSFIYSPRPFTEAGAWKERVPLEVSSSRLERLQNRHKEILEEKAKLEVGKTHVVLVENRREIDNQIVGFEGRSDTGKFIEVACKEKRNPGELVRVEIVSHSKGRLIATAKGD.

An MTTase N-terminal domain is found at 1 to 115 (MKVYIETMGC…ISQVIHKEKA (115 aa)). Residues cysteine 10, cysteine 46, cysteine 78, cysteine 148, cysteine 152, and cysteine 155 each contribute to the [4Fe-4S] cluster site. The region spanning 134–367 (KKAQIRSLLN…QNRHKEILEE (234 aa)) is the Radical SAM core domain. The TRAM domain occupies 370-436 (KLEVGKTHVV…KGRLIATAKG (67 aa)).

It belongs to the methylthiotransferase family. MiaB subfamily. Monomer. The cofactor is [4Fe-4S] cluster.

It is found in the cytoplasm. It catalyses the reaction N(6)-dimethylallyladenosine(37) in tRNA + (sulfur carrier)-SH + AH2 + 2 S-adenosyl-L-methionine = 2-methylsulfanyl-N(6)-dimethylallyladenosine(37) in tRNA + (sulfur carrier)-H + 5'-deoxyadenosine + L-methionine + A + S-adenosyl-L-homocysteine + 2 H(+). Functionally, catalyzes the methylthiolation of N6-(dimethylallyl)adenosine (i(6)A), leading to the formation of 2-methylthio-N6-(dimethylallyl)adenosine (ms(2)i(6)A) at position 37 in tRNAs that read codons beginning with uridine. In Helicobacter pylori (strain Shi470), this protein is tRNA-2-methylthio-N(6)-dimethylallyladenosine synthase.